Consider the following 314-residue polypeptide: Fibrinogen-like protein 1 (314 aa).

The N-terminal stretch at 1–22 is a signal peptide; the sequence is MGKIYSFVLVAIALMMGREGWA. Positions 28-62 form a coiled coil; the sequence is CLREQVRLRAQVHQLETRVKQQQTMIAQLLHEKEV. Residues 76–308 form the Fibrinogen C-terminal domain; it reads LGGKRQYADC…SVVMKIRPSD (233 aa). 2 cysteine pairs are disulfide-bonded: Cys-85–Cys-114 and Cys-250–Cys-263.

As to quaternary structure, homodimer. Interacts (via the Fibrinogen C-terminal domain) with LAG3 (via Ig-like domains 1 and 2). As to expression, mainly expressed in liver. Also expressed in brown adipose tissue.

The protein localises to the secreted. Its function is as follows. Immune suppressive molecule that inhibits antigen-specific T-cell activation by acting as a major ligand of LAG3. Responsible for LAG3 T-cell inhibitory function. Binds LAG3 independently from MHC class II (MHC-II). Secreted by, and promotes growth of, hepatocytes. The chain is Fibrinogen-like protein 1 (Fgl1) from Mus musculus (Mouse).